The sequence spans 249 residues: tRNA pseudouridine synthase A (249 aa).

D53 acts as the Nucleophile in catalysis. Y111 provides a ligand contact to substrate.

Belongs to the tRNA pseudouridine synthase TruA family. In terms of assembly, homodimer.

The enzyme catalyses uridine(38/39/40) in tRNA = pseudouridine(38/39/40) in tRNA. In terms of biological role, formation of pseudouridine at positions 38, 39 and 40 in the anticodon stem and loop of transfer RNAs. The chain is tRNA pseudouridine synthase A from Streptococcus equi subsp. zooepidemicus (strain MGCS10565).